The sequence spans 144 residues: Large ribosomal subunit protein uL15 (144 aa).

Residues 1 to 49 are disordered; it reads MRLNTLSPAAGAKSAAKRVGRGIGSGTGKTCGRGHKGQKSRSGGGVRVG. Residues 21–31 show a composition bias toward gly residues; sequence RGIGSGTGKTC.

This sequence belongs to the universal ribosomal protein uL15 family. Part of the 50S ribosomal subunit.

Functionally, binds to the 23S rRNA. This Shewanella sediminis (strain HAW-EB3) protein is Large ribosomal subunit protein uL15.